Here is a 203-residue protein sequence, read N- to C-terminus: ATP phosphoribosyltransferase (203 aa).

This sequence belongs to the ATP phosphoribosyltransferase family. Short subfamily.

The protein resides in the cytoplasm. The catalysed reaction is 1-(5-phospho-beta-D-ribosyl)-ATP + diphosphate = 5-phospho-alpha-D-ribose 1-diphosphate + ATP. It functions in the pathway amino-acid biosynthesis; L-histidine biosynthesis; L-histidine from 5-phospho-alpha-D-ribose 1-diphosphate: step 1/9. Catalyzes the condensation of ATP and 5-phosphoribose 1-diphosphate to form N'-(5'-phosphoribosyl)-ATP (PR-ATP). Has a crucial role in the pathway because the rate of histidine biosynthesis seems to be controlled primarily by regulation of HisG enzymatic activity. This chain is ATP phosphoribosyltransferase, found in Thermococcus kodakarensis (strain ATCC BAA-918 / JCM 12380 / KOD1) (Pyrococcus kodakaraensis (strain KOD1)).